The sequence spans 325 residues: Tagatose 1,6-diphosphate aldolase (325 aa).

This sequence belongs to the aldolase LacD family.

The catalysed reaction is D-tagatofuranose 1,6-bisphosphate = D-glyceraldehyde 3-phosphate + dihydroxyacetone phosphate. It functions in the pathway carbohydrate metabolism; D-tagatose 6-phosphate degradation; D-glyceraldehyde 3-phosphate and glycerone phosphate from D-tagatose 6-phosphate: step 2/2. This is Tagatose 1,6-diphosphate aldolase from Staphylococcus epidermidis (strain ATCC 35984 / DSM 28319 / BCRC 17069 / CCUG 31568 / BM 3577 / RP62A).